We begin with the raw amino-acid sequence, 247 residues long: 2,3-bisphosphoglycerate-dependent phosphoglycerate mutase (247 aa).

Substrate-binding positions include 8–15 (RHGESVWN), 21–22 (TG), R60, 87–90 (ERHY), K98, 114–115 (RR), and 183–184 (GN). H9 acts as the Tele-phosphohistidine intermediate in catalysis. Residue E87 is the Proton donor/acceptor of the active site.

The protein belongs to the phosphoglycerate mutase family. BPG-dependent PGAM subfamily. As to quaternary structure, homodimer.

It catalyses the reaction (2R)-2-phosphoglycerate = (2R)-3-phosphoglycerate. Its pathway is carbohydrate degradation; glycolysis; pyruvate from D-glyceraldehyde 3-phosphate: step 3/5. Catalyzes the interconversion of 2-phosphoglycerate and 3-phosphoglycerate. The polypeptide is 2,3-bisphosphoglycerate-dependent phosphoglycerate mutase (Geobacter sulfurreducens (strain ATCC 51573 / DSM 12127 / PCA)).